We begin with the raw amino-acid sequence, 311 residues long: Lipoyl synthase (311 aa).

[4Fe-4S] cluster-binding residues include Cys47, Cys52, Cys58, Cys73, Cys77, Cys80, and Ser286. The 218-residue stretch at 59-276 (WSRHTATYLA…RSVGESLGLF (218 aa)) folds into the Radical SAM core domain.

Belongs to the radical SAM superfamily. Lipoyl synthase family. [4Fe-4S] cluster serves as cofactor.

It localises to the cytoplasm. It carries out the reaction [[Fe-S] cluster scaffold protein carrying a second [4Fe-4S](2+) cluster] + N(6)-octanoyl-L-lysyl-[protein] + 2 oxidized [2Fe-2S]-[ferredoxin] + 2 S-adenosyl-L-methionine + 4 H(+) = [[Fe-S] cluster scaffold protein] + N(6)-[(R)-dihydrolipoyl]-L-lysyl-[protein] + 4 Fe(3+) + 2 hydrogen sulfide + 2 5'-deoxyadenosine + 2 L-methionine + 2 reduced [2Fe-2S]-[ferredoxin]. It functions in the pathway protein modification; protein lipoylation via endogenous pathway; protein N(6)-(lipoyl)lysine from octanoyl-[acyl-carrier-protein]: step 2/2. Catalyzes the radical-mediated insertion of two sulfur atoms into the C-6 and C-8 positions of the octanoyl moiety bound to the lipoyl domains of lipoate-dependent enzymes, thereby converting the octanoylated domains into lipoylated derivatives. This Chlamydia trachomatis serovar L2 (strain ATCC VR-902B / DSM 19102 / 434/Bu) protein is Lipoyl synthase.